The following is a 430-amino-acid chain: Corticosteroid-binding globulin (430 aa).

The signal sequence occupies residues 1–22 (MLLTLYTCLLWLSTSGLWTIQA). 3 N-linked (GlcNAc...) asparagine glycosylation sites follow: Asn-119, Asn-175, and Asn-243. Gln-253 is a cortisol binding site. N-linked (GlcNAc...) asparagine glycosylation occurs at Asn-259. Gln-285 serves as a coordination point for cortisol. Asn-326 is a glycosylation site (N-linked (GlcNAc...) asparagine). Trp-392 contacts cortisol.

Belongs to the serpin family. Expressed by the liver; secreted in plasma.

It is found in the secreted. In terms of biological role, major transport protein for glucocorticoids and progestins in the blood of almost all vertebrate species. This chain is Corticosteroid-binding globulin (SERPINA6), found in Ovis aries (Sheep).